We begin with the raw amino-acid sequence, 975 residues long: Glycine dehydrogenase (decarboxylating) (975 aa).

N6-(pyridoxal phosphate)lysine is present on Lys-723.

The protein belongs to the GcvP family. In terms of assembly, the glycine cleavage system is composed of four proteins: P, T, L and H. The cofactor is pyridoxal 5'-phosphate.

It catalyses the reaction N(6)-[(R)-lipoyl]-L-lysyl-[glycine-cleavage complex H protein] + glycine + H(+) = N(6)-[(R)-S(8)-aminomethyldihydrolipoyl]-L-lysyl-[glycine-cleavage complex H protein] + CO2. The glycine cleavage system catalyzes the degradation of glycine. The P protein binds the alpha-amino group of glycine through its pyridoxal phosphate cofactor; CO(2) is released and the remaining methylamine moiety is then transferred to the lipoamide cofactor of the H protein. This Burkholderia mallei (strain NCTC 10247) protein is Glycine dehydrogenase (decarboxylating).